The chain runs to 260 residues: Thiazole synthase (260 aa).

Catalysis depends on lysine 96, which acts as the Schiff-base intermediate with DXP. Residues glycine 157, 184–185 (AG), and 206–207 (NT) contribute to the 1-deoxy-D-xylulose 5-phosphate site.

It belongs to the ThiG family. In terms of assembly, homotetramer. Forms heterodimers with either ThiH or ThiS.

Its subcellular location is the cytoplasm. The enzyme catalyses [ThiS sulfur-carrier protein]-C-terminal-Gly-aminoethanethioate + 2-iminoacetate + 1-deoxy-D-xylulose 5-phosphate = [ThiS sulfur-carrier protein]-C-terminal Gly-Gly + 2-[(2R,5Z)-2-carboxy-4-methylthiazol-5(2H)-ylidene]ethyl phosphate + 2 H2O + H(+). It participates in cofactor biosynthesis; thiamine diphosphate biosynthesis. Its function is as follows. Catalyzes the rearrangement of 1-deoxy-D-xylulose 5-phosphate (DXP) to produce the thiazole phosphate moiety of thiamine. Sulfur is provided by the thiocarboxylate moiety of the carrier protein ThiS. In vitro, sulfur can be provided by H(2)S. This is Thiazole synthase from Nitrobacter winogradskyi (strain ATCC 25391 / DSM 10237 / CIP 104748 / NCIMB 11846 / Nb-255).